Consider the following 414-residue polypeptide: Secernin-1 (414 aa).

Ala2 carries the post-translational modification N-acetylalanine. Cys9 is an active-site residue.

This sequence belongs to the peptidase C69 family. Secernin subfamily.

The protein localises to the cytoplasm. Its function is as follows. Regulates exocytosis in mast cells. Increases both the extent of secretion and the sensitivity of mast cells to stimulation with calcium. The sequence is that of Secernin-1 (SCRN1) from Bos taurus (Bovine).